A 133-amino-acid chain; its full sequence is Ribosome-binding factor A (133 aa).

It belongs to the RbfA family. As to quaternary structure, monomer. Binds 30S ribosomal subunits, but not 50S ribosomal subunits or 70S ribosomes.

It localises to the cytoplasm. Its function is as follows. One of several proteins that assist in the late maturation steps of the functional core of the 30S ribosomal subunit. Associates with free 30S ribosomal subunits (but not with 30S subunits that are part of 70S ribosomes or polysomes). Required for efficient processing of 16S rRNA. May interact with the 5'-terminal helix region of 16S rRNA. The protein is Ribosome-binding factor A of Pseudomonas fluorescens (strain Pf0-1).